The chain runs to 878 residues: MTVTPMMAQYLDLKAEYADALLFYRMGDFYEMFFEDAVAAAEALDIALTKRGKHDGADIPMCGVPVHSAEGYLLTLIRKRFRVAVCEQMESPAEAKKRGSKSVVKRDVVRLVTPGTLTEETLLDARRNNYLTSFAQVRDAKALAWTDISTGAFHVMPLTALKLGPELARLAPSELICSESAENDLREVAEDFGIALTGLARAAFDSTSAEQRICDLFGVETLDSYGSFTRAEVAAMGGIIQYLDITQKGKLPLLRPPQRETENRTIQIDAATRRNLELTQALSGGRAGSLLAVIDRTITAAGGRLMSARIASPSRDLETITNRLDAVSFAQDHHDLCGALRDHLRKVPDLDRALSRLSLDRGGPRDMAAIRNGLTQSAILFETLGSHELPPLLADALNDLSRHDNLIDRLDATLVAEPPLLARDGGFIATGFDAELDEARSLRDEGRSVIARMQQEFAALTGITSLKIKHNNVLGYFIETTATHAEKMLSPPMSETFIHRQTTANQVRFTTVELSELETKILNAGGRALEIEKRLYETLKSDILACSARIAQTASALAELDLTTALATLATTDGWVRPKVDDSRAFAIENGRHPVVENALRQQSGDPFIANDCDLSAEEDAAQIYLLTGPNMAGKSTYLRQNAIIALLAQMGSFVPASCAHIGLISQLFSRVGASDDLARGRSTFMVEMVETAAILNQADDRALVILDEIGRGTATYDGLSIAWATLEHLHDVNKSRALFATHYHEMTALAGKLPGVENATVTVKEWEGEVIFLHEVKMGAADRSYGVQVAQLAGLPPAVISRARAVLDMLEKGEREGGATQKTLIDDLPLFSVAPAPAPAPAKTSDVEARLAEIHPDELTPKQALELLYQLKEAANP.

Residue 629–636 (GPNMAGKS) coordinates ATP.

It belongs to the DNA mismatch repair MutS family.

This protein is involved in the repair of mismatches in DNA. It is possible that it carries out the mismatch recognition step. This protein has a weak ATPase activity. The polypeptide is DNA mismatch repair protein MutS (Roseobacter denitrificans (strain ATCC 33942 / OCh 114) (Erythrobacter sp. (strain OCh 114))).